Reading from the N-terminus, the 202-residue chain is Imidazoleglycerol-phosphate dehydratase (202 aa).

The protein belongs to the imidazoleglycerol-phosphate dehydratase family.

The protein resides in the cytoplasm. It catalyses the reaction D-erythro-1-(imidazol-4-yl)glycerol 3-phosphate = 3-(imidazol-4-yl)-2-oxopropyl phosphate + H2O. Its pathway is amino-acid biosynthesis; L-histidine biosynthesis; L-histidine from 5-phospho-alpha-D-ribose 1-diphosphate: step 6/9. In Clavibacter michiganensis subsp. michiganensis (strain NCPPB 382), this protein is Imidazoleglycerol-phosphate dehydratase.